Reading from the N-terminus, the 639-residue chain is NADP-dependent malic enzyme, chloroplastic (639 aa).

A chloroplast-targeting transit peptide spans M1–R49. The tract at residues A15–T34 is disordered. The active-site Proton donor is Y187. Residue R240 participates in NAD(+) binding. K258 functions as the Proton acceptor in the catalytic mechanism. Positions 330, 331, and 354 each coordinate a divalent metal cation. D354 lines the NAD(+) pocket. L383–A399 contacts NADP(+). N495 provides a ligand contact to NAD(+).

The protein belongs to the malic enzymes family. In terms of assembly, homotetramer. Mg(2+) serves as cofactor. Mn(2+) is required as a cofactor.

It is found in the plastid. The protein localises to the chloroplast. The enzyme catalyses (S)-malate + NADP(+) = pyruvate + CO2 + NADPH. It carries out the reaction oxaloacetate + H(+) = pyruvate + CO2. It participates in photosynthesis; C4 acid pathway. Its function is as follows. The chloroplastic ME isoform decarboxylates malate shuttled from neighboring mesophyll cells. The CO(2) released is then refixed by ribulose-bisphosphate carboxylase. This pathway eliminates the photorespiratory loss of CO(2) that occurs in most plants. This is NADP-dependent malic enzyme, chloroplastic (ME6) from Oryza sativa subsp. japonica (Rice).